Here is a 317-residue protein sequence, read N- to C-terminus: NADH kinase (317 aa).

This sequence belongs to the NAD kinase family. In terms of assembly, homodimer. As to expression, ubiquitous.

It is found in the cytoplasm. The catalysed reaction is NADH + ATP = ADP + NADPH + H(+). With respect to regulation, two-fold decrease in activity in the presence of PPi, iodoacetate or para-chloromercuribenzoate. Phosphorylates specifically NADH. Can phosphorylate NAD with a 100-fold decrease in efficiency compared to NADH. Prefers ATP as nucleoside triphosphate substrate. Can also utilize UTP, GTP and CTP. Key source of the cellular reductant NADPH which is an important antioxidant factor. The protein is NADH kinase (NADK3) of Arabidopsis thaliana (Mouse-ear cress).